Reading from the N-terminus, the 390-residue chain is Serine/threonine/tyrosine-protein kinase HT1 (390 aa).

Residues 86–359 (LFIGNKFASG…GLPLTSHASL (274 aa)) form the Protein kinase domain. Residues 92-100 (FASGAHSRI) and K113 contribute to the ATP site. Residue D212 is the Proton acceptor of the active site.

This sequence belongs to the protein kinase superfamily. Ser/Thr protein kinase family. As to quaternary structure, interacts with DTX56. Binds to MPK4 and MPK12. Associates to CBC1 and CBC2. Post-translationally, autophosphorylated. Mainly localizes in guard cells. Expressed at low level in leaves, stems, roots and flowers.

The protein resides in the cell membrane. It catalyses the reaction L-seryl-[protein] + ATP = O-phospho-L-seryl-[protein] + ADP + H(+). The catalysed reaction is L-threonyl-[protein] + ATP = O-phospho-L-threonyl-[protein] + ADP + H(+). The enzyme catalyses L-tyrosyl-[protein] + ATP = O-phospho-L-tyrosyl-[protein] + ADP + H(+). With respect to regulation, inhibited by MPK4 and MPK12. In terms of biological role, serine/threonine/tyrosine kinase involved in the control of stomatal movement in response to CO(2). Functions as a major negative regulator of CO(2)-induced stomatal closing. Does not seem to be involved in stomatal closure in response to abscisic acid (ABA) or light. Involved in the control of red light-induced stomatal opening. Is epistatic to SRK2E/OST1 function during stomatal responses to red light and altered CO(2). Phosphorylates SRK2E/OST1 and GHR1 to prevents SRK2E/OST1- and GHR1-induced activation of SLAC1, thus preventing stomatal closure. Mediates the phosphorylation of CBC1 and CBC2. In Arabidopsis thaliana (Mouse-ear cress), this protein is Serine/threonine/tyrosine-protein kinase HT1.